The primary structure comprises 296 residues: Probable redox regulatory protein BQ2027_MB0506C (296 aa).

This sequence belongs to the Rv0495c family.

In terms of biological role, essential for maintaining intracellular redox homeostasis. The sequence is that of Probable redox regulatory protein BQ2027_MB0506C from Mycobacterium bovis (strain ATCC BAA-935 / AF2122/97).